Reading from the N-terminus, the 281-residue chain is F-actin-capping protein subunit alpha (281 aa).

Belongs to the F-actin-capping protein alpha subunit family. As to quaternary structure, component of the F-actin capping complex, composed of a heterodimer of an alpha and a beta subunit.

Its subcellular location is the cytoplasm. The protein resides in the cytoskeleton. Functionally, F-actin-capping proteins bind in a Ca(2+)-independent manner to the fast growing ends of actin filaments (barbed end) thereby blocking the exchange of subunits at these ends. Unlike other capping proteins (such as gelsolin and severin), these proteins do not sever actin filaments. This chain is F-actin-capping protein subunit alpha (acpB), found in Dictyostelium discoideum (Social amoeba).